The chain runs to 179 residues: Small ribosomal subunit protein uS5c (179 aa).

One can recognise an S5 DRBM domain in the interval 26 to 89 (FVERLIKISR…TDGRKNLIDV (64 aa)).

This sequence belongs to the universal ribosomal protein uS5 family. Part of the 30S ribosomal subunit. Contacts protein S4.

It localises to the plastid. Its subcellular location is the chloroplast. Functionally, with S4 and S12 plays an important role in translational accuracy. This is Small ribosomal subunit protein uS5c (rps5) from Thalassiosira pseudonana (Marine diatom).